The primary structure comprises 158 residues: C-type natriuretic peptide 3 (158 aa).

The N-terminal stretch at 1 to 21 (MSLNLPGYALFFILLVASSGA) is a signal peptide. A propeptide spanning residues 22–136 (KPAPDLQILE…SKRSRSRYKK (115 aa)) is cleaved from the precursor. The segment at 32–95 (PPLSSLEEQE…EVQERGRGTG (64 aa)) is disordered. The segment covering 47 to 64 (VQEKVQEQQEEVQEKVQE) has biased composition (basic and acidic residues). Over residues 65–86 (QQEEVQEQQEEVQEQQEEQQEE) the composition is skewed to acidic residues. A disulfide bridge connects residues Cys-142 and Cys-158.

The protein belongs to the natriuretic peptide family.

The protein resides in the secreted. In terms of biological role, exhibits natriuretic and vasodepressant activity. Has cGMP-stimulating activity. May help to regulate body fluid homeostasis in a variety of aquatic environments. The protein is C-type natriuretic peptide 3 of Takifugu rubripes (Japanese pufferfish).